The primary structure comprises 106 residues: HIG1 domain family member 2A (106 aa).

An N-acetylalanine modification is found at Ala-2. An HIG1 domain is found at 20-106 (VIEGFSPTVY…LAASAMKSQA (87 aa)). 2 helical membrane-spanning segments follow: residues 47 to 67 (PMVPIGCLGTAAALTYGLYCF) and 83 to 103 (IAAQGFTVVAILLGLAASAMK).

In terms of assembly, associates with cytochrome c oxidase (COX, complex IV); proposed complex component.

Its subcellular location is the mitochondrion membrane. It is found in the mitochondrion inner membrane. Proposed subunit of cytochrome c oxidase (COX, complex IV), which is the terminal component of the mitochondrial respiratory chain that catalyzes the reduction of oxygen to water. May be involved in cytochrome c oxidase activity. May play a role in the assembly of respiratory supercomplexes. The protein is HIG1 domain family member 2A (Higd2a) of Mus musculus (Mouse).